A 193-amino-acid polypeptide reads, in one-letter code: Peptidyl-tRNA hydrolase (193 aa).

His17 contacts tRNA. Catalysis depends on His22, which acts as the Proton acceptor. TRNA contacts are provided by Phe68, Asn70, and Asn116.

It belongs to the PTH family. Monomer.

The protein localises to the cytoplasm. It carries out the reaction an N-acyl-L-alpha-aminoacyl-tRNA + H2O = an N-acyl-L-amino acid + a tRNA + H(+). Hydrolyzes ribosome-free peptidyl-tRNAs (with 1 or more amino acids incorporated), which drop off the ribosome during protein synthesis, or as a result of ribosome stalling. In terms of biological role, catalyzes the release of premature peptidyl moieties from peptidyl-tRNA molecules trapped in stalled 50S ribosomal subunits, and thus maintains levels of free tRNAs and 50S ribosomes. This Xanthomonas euvesicatoria pv. vesicatoria (strain 85-10) (Xanthomonas campestris pv. vesicatoria) protein is Peptidyl-tRNA hydrolase.